We begin with the raw amino-acid sequence, 216 residues long: MLEIFDVSYNDLTERRSEDLYKLRKITFKDRLDWAVNCSNDMEFDEFDNSGTRYMLGIYDNQLVCSVRFIDLRLPNMITHTFQHLFGDVKLPEGDYIESSRFFVDKNRAKALLGSRYPISYVLFLSMINYARHHGHTGIYTIVSRAMLTIAKRSGWEIEVIKEGFVSENEPIYLLRLPIDCHNQHLLAKRIRDQSESNIAALCQWPMSLTVTPEQV.

This sequence belongs to the autoinducer synthase family.

It carries out the reaction a fatty acyl-[ACP] + S-adenosyl-L-methionine = an N-acyl-L-homoserine lactone + S-methyl-5'-thioadenosine + holo-[ACP] + H(+). In terms of biological role, required for the synthesis of OHHL (N-(3-oxohexanoyl)-L-homoserine lactone), an autoinducer molecule which binds to a yet uncharacterized transcriptional regulator. The sequence is that of Acyl-homoserine-lactone synthase (eagI) from Enterobacter agglomerans (Erwinia herbicola).